Reading from the N-terminus, the 331-residue chain is Glyceraldehyde-3-phosphate dehydrogenase (331 aa).

Residues 12–13 (RI), D34, R78, and T120 contribute to the NAD(+) site. N6-acetyllysine is present on residues K132 and K138. D-glyceraldehyde 3-phosphate-binding positions include 149–151 (SCT) and T180. C150 (nucleophile) is an active-site residue. K192 is modified (N6-acetyllysine). Residues 209 to 210 (TG) and R232 contribute to the D-glyceraldehyde 3-phosphate site. At K249 the chain carries N6-acetyllysine. An NAD(+)-binding site is contributed by N314.

This sequence belongs to the glyceraldehyde-3-phosphate dehydrogenase family. As to quaternary structure, homotetramer.

Its subcellular location is the cytoplasm. It catalyses the reaction D-glyceraldehyde 3-phosphate + phosphate + NAD(+) = (2R)-3-phospho-glyceroyl phosphate + NADH + H(+). It functions in the pathway carbohydrate degradation; glycolysis; pyruvate from D-glyceraldehyde 3-phosphate: step 1/5. Its function is as follows. Catalyzes the oxidative phosphorylation of glyceraldehyde 3-phosphate (G3P) to 1,3-bisphosphoglycerate (BPG) using the cofactor NAD. The first reaction step involves the formation of a hemiacetal intermediate between G3P and a cysteine residue, and this hemiacetal intermediate is then oxidized to a thioester, with concomitant reduction of NAD to NADH. The reduced NADH is then exchanged with the second NAD, and the thioester is attacked by a nucleophilic inorganic phosphate to produce BPG. The chain is Glyceraldehyde-3-phosphate dehydrogenase (gapA) from Escherichia coli O6:H1 (strain CFT073 / ATCC 700928 / UPEC).